Here is a 554-residue protein sequence, read N- to C-terminus: Arginine--tRNA ligase (554 aa).

The 'HIGH' region signature appears at 130–140 (ANPTGDLHIGH).

The protein belongs to the class-I aminoacyl-tRNA synthetase family. As to quaternary structure, monomer.

The protein localises to the cytoplasm. It catalyses the reaction tRNA(Arg) + L-arginine + ATP = L-arginyl-tRNA(Arg) + AMP + diphosphate. The polypeptide is Arginine--tRNA ligase (Staphylococcus carnosus (strain TM300)).